The chain runs to 211 residues: Holliday junction resolvase RecU (211 aa).

Mg(2+)-binding residues include T87, D89, D102, and Q121.

Belongs to the RecU family. Mg(2+) serves as cofactor.

The protein resides in the cytoplasm. It catalyses the reaction Endonucleolytic cleavage at a junction such as a reciprocal single-stranded crossover between two homologous DNA duplexes (Holliday junction).. In terms of biological role, endonuclease that resolves Holliday junction intermediates in genetic recombination. Cleaves mobile four-strand junctions by introducing symmetrical nicks in paired strands. Promotes annealing of linear ssDNA with homologous dsDNA. Required for DNA repair, homologous recombination and chromosome segregation. This chain is Holliday junction resolvase RecU, found in Limosilactobacillus fermentum (strain NBRC 3956 / LMG 18251) (Lactobacillus fermentum).